A 1093-amino-acid chain; its full sequence is Error-prone DNA polymerase (1093 aa).

The disordered stretch occupies residues 1-55 (MGWFNGPPSWAEMERVLDSKPRRAGESAAPEPDGPLSRGRATYRPPDEGRAARSS). Over residues 12 to 25 (EMERVLDSKPRRAG) the composition is skewed to basic and acidic residues.

This sequence belongs to the DNA polymerase type-C family. DnaE2 subfamily.

It is found in the cytoplasm. It carries out the reaction DNA(n) + a 2'-deoxyribonucleoside 5'-triphosphate = DNA(n+1) + diphosphate. Its function is as follows. DNA polymerase involved in damage-induced mutagenesis and translesion synthesis (TLS). It is not the major replicative DNA polymerase. This Mycolicibacterium paratuberculosis (strain ATCC BAA-968 / K-10) (Mycobacterium paratuberculosis) protein is Error-prone DNA polymerase.